Reading from the N-terminus, the 390-residue chain is Nucleosome assembly protein 1-like 1 (390 aa).

Positions 1 to 10 (MADIDNKEQS) are enriched in basic and acidic residues. The disordered stretch occupies residues 1 to 32 (MADIDNKEQSELDQDLEDVEEVEEEETGEETK). N-acetylalanine is present on Ala2. At Ser10 the chain carries Phosphoserine. A compositionally biased stretch (acidic residues) spans 11 to 28 (ELDQDLEDVEEVEEEETG). Thr62 and Thr64 each carry phosphothreonine. Ser69 is modified (phosphoserine). At Lys116 the chain carries N6-acetyllysine. The NAP1L motif motif lies at 125-150 (YEPTEEECEWKPDEEDEVSEELKEKA). The span at 131-143 (ECEWKPDEEDEVS) shows a compositional bias: acidic residues. The segment at 131–163 (ECEWKPDEEDEVSEELKEKAKIEDEKKDEEKED) is disordered. A Phosphoserine modification is found at Ser143. A compositionally biased stretch (basic and acidic residues) spans 144–163 (EELKEKAKIEDEKKDEEKED). The Nuclear localization signal motif lies at 272 to 278 (IKKKQKH). A compositionally biased stretch (acidic residues) spans 345 to 375 (AIEDDDDDYDEEGEEADEEGEEEGDEENDPD). The disordered stretch occupies residues 345–390 (AIEDDDDDYDEEGEEADEEGEEEGDEENDPDYDPKKDQNPAECKQQ). A 5-glutamyl polyglycine mark is found at Glu358 and Glu359. The span at 376-390 (YDPKKDQNPAECKQQ) shows a compositional bias: basic and acidic residues. Position 387 is a cysteine methyl ester (Cys387). Residue Cys387 is the site of S-farnesyl cysteine attachment. A propeptide spans 388 to 390 (KQQ) (removed in mature form).

Belongs to the nucleosome assembly protein (NAP) family. In terms of assembly, homodimer. The dimer binds strongly and sequentially to single and double H2A-H2B heterodimers. Interacts with ERCC6; this interaction increases ERCC6 processivity. Interacts with RAD54. Interacts with SETD1A. Post-translationally, polyglycylated by TTLL10 on glutamate residues, resulting in polyglycine chains on the gamma-carboxyl group. Both polyglutamylation and polyglycylation modifications can coexist on the same protein on adjacent residues, and lowering polyglycylation levels increases polyglutamylation, and reciprocally. In terms of processing, polyglutamylated by TTLL4 on glutamate residues, resulting in polyglutamate chains on the gamma-carboxyl group. Both polyglutamylation and polyglycylation modifications can coexist on the same protein on adjacent residues, and lowering polyglycylation levels increases polyglutamylation, and reciprocally.

It is found in the nucleus. It localises to the melanosome. The protein resides in the cytoplasm. In terms of biological role, histone chaperone that plays a role in the nuclear import of H2A-H2B and nucleosome assembly. Also participates in several important DNA repair mechanisms: greatly enhances ERCC6-mediated chromatin remodeling which is essential for transcription-coupled nucleotide excision DNA repair. Also stimulates homologous recombination (HR) by RAD51 and RAD54 which is essential in mitotic DNA double strand break (DSB) repair. Plays a key role in the regulation of embryonic neurogenesis. Promotes the proliferation of neural progenitors and inhibits neuronal differentiation during cortical development. Regulates neurogenesis via the modulation of RASSF10; regulates RASSF10 expression by promoting SETD1A-mediated H3K4 methylation at the RASSF10 promoter. The polypeptide is Nucleosome assembly protein 1-like 1 (Nap1l1) (Rattus norvegicus (Rat)).